The sequence spans 126 residues: Protein ApaG (126 aa).

Positions 2–126 constitute an ApaG domain; that stretch reads SDTQHQVNVR…FRLAVPGALH (125 aa).

This chain is Protein ApaG, found in Pseudomonas paraeruginosa (strain DSM 24068 / PA7) (Pseudomonas aeruginosa (strain PA7)).